The following is a 972-amino-acid chain: Serine/threonine-protein kinase ATG1 (972 aa).

Positions 18-319 (YVVEKEIGRG…FTEFFSNGLV (302 aa)) constitute a Protein kinase domain. ATP is bound by residues 24-32 (IGRGSFAVV) and lysine 48. Aspartate 166 acts as the Proton acceptor in catalysis. Disordered stretches follow at residues 359-394 (KRASPIRLGDSCTLRGPCESPQGADPYPQDNTQSDQ), 424-444 (YNNQEERSNEERQFGQVSNGR), 467-506 (ALQSHSHVAAKQIPDKDSKSSVSCQKHAASAPTKNDHRTT), 562-605 (ASQA…SRRP), and 743-764 (DDEEDDIEHSPGAETYRKNSSG). Positions 424–436 (YNNQEERSNEERQ) are enriched in basic and acidic residues. The segment covering 562–584 (ASQALQMARHSSTSVSAANTAKQ) has biased composition (polar residues). Positions 585–605 (TLLRRNSRTLSSSGASTSRRP) are enriched in low complexity. Basic and acidic residues predominate over residues 750 to 759 (EHSPGAETYR).

This sequence belongs to the protein kinase superfamily. Ser/Thr protein kinase family. APG1/unc-51/ULK1 subfamily. In terms of assembly, homodimer. Forms a ternary complex with ATG13 and ATG17.

It localises to the cytoplasm. Its subcellular location is the preautophagosomal structure membrane. It carries out the reaction L-seryl-[protein] + ATP = O-phospho-L-seryl-[protein] + ADP + H(+). The catalysed reaction is L-threonyl-[protein] + ATP = O-phospho-L-threonyl-[protein] + ADP + H(+). Functionally, serine/threonine protein kinase involved in the cytoplasm to vacuole transport (Cvt) and found to be essential in autophagy, where it is required for the formation of autophagosomes. Involved in the clearance of protein aggregates which cannot be efficiently cleared by the proteasome. Required for selective autophagic degradation of the nucleus (nucleophagy) as well as for mitophagy which contributes to regulate mitochondrial quantity and quality by eliminating the mitochondria to a basal level to fulfill cellular energy requirements and preventing excess ROS production. Also involved in endoplasmic reticulum-specific autophagic process, in selective removal of ER-associated degradation (ERAD) substrates. Plays a key role in ATG9 and ATG23 cycling through the pre-autophagosomal structure and is necessary to promote ATG18 binding to ATG9 through phosphorylation of ATG9. Catalyzes phosphorylation of ATG4, decreasing the interaction between ATG4 and ATG8 and impairing deconjugation of PE-conjugated forms of ATG8. This chain is Serine/threonine-protein kinase ATG1, found in Eremothecium gossypii (strain ATCC 10895 / CBS 109.51 / FGSC 9923 / NRRL Y-1056) (Yeast).